A 1058-amino-acid chain; its full sequence is Kinesin-like protein KIN-7M, chloroplastic (1058 aa).

The transit peptide at 1-60 directs the protein to the chloroplast; that stretch reads MASSSSRTRSRSPFSHRRPPSPYSSASSTSSSLINNRLLPRSSSTPTSTVYNSGGVTGSR. A disordered region spans residues 1-92; sequence MASSSSRTRS…QSYPSEGLIG (92 aa). Residues 8–19 are compositionally biased toward basic residues; the sequence is TRSRSPFSHRRP. The span at 23-49 shows a compositional bias: low complexity; the sequence is YSSASSTSSSLINNRLLPRSSSTPTST. Positions 50–70 are enriched in polar residues; it reads VYNSGGVTGSRSMSITRTISD. The region spanning 104–421 is the Kinesin motor domain; sequence SISVTVRFRP…LKFASRAKRI (318 aa). Residue 184 to 191 participates in ATP binding; sequence GVTSSGKT. Residues 422-509 adopt a coiled-coil conformation; it reads EINASRNKII…QKLTKLILVS (88 aa). The interval 549–578 is disordered; it reads PSSTLSLASDARRSSSKFKDENSPVGSRAE. Positions 558 to 570 are enriched in basic and acidic residues; it reads DARRSSSKFKDEN. 4 coiled-coil regions span residues 621-658, 704-826, 873-904, and 935-999; these read PENS…ASIA, NNEL…AQKR, LEAA…LEND, and KEDE…SQAA. Residues 824 to 838 are compositionally biased toward low complexity; the sequence is QKRNNNSMNSAANRN. A disordered region spans residues 824–847; that stretch reads QKRNNNSMNSAANRNGTRPGRKAR. The tract at residues 922-946 is disordered; the sequence is ALSIQKSDEAEPAKEDEVTELDNKN. Basic and acidic residues predominate over residues 927–946; that stretch reads KSDEAEPAKEDEVTELDNKN. The RING-type zinc-finger motif lies at 1011–1046; sequence CKVCFESPTATILLPCRHFCLCKSCSLACSECPICR.

This sequence belongs to the TRAFAC class myosin-kinesin ATPase superfamily. Kinesin family. KIN-7 subfamily.

Its subcellular location is the plastid. It localises to the chloroplast. This is Kinesin-like protein KIN-7M, chloroplastic from Arabidopsis thaliana (Mouse-ear cress).